The following is a 108-amino-acid chain: Iron-sulfur cluster assembly protein CyaY (108 aa).

This sequence belongs to the frataxin family.

In terms of biological role, involved in iron-sulfur (Fe-S) cluster assembly. May act as a regulator of Fe-S biogenesis. The chain is Iron-sulfur cluster assembly protein CyaY from Burkholderia ambifaria (strain MC40-6).